A 302-amino-acid polypeptide reads, in one-letter code: MMNFTLLTYLADCQPKVRSELEKFSKNLEEDIQQLREIGLDILVDGQDYRLVPMLPLLNPQQISTALFPYSIHYQPIISSTNEWILQNILSLKKGDLCVAEYQTAGRGRRGRQWLSPFAGQIMFSFYWAFDPKKSIEGLSLVIGLAIAEVLNVQVKWPNDILFDERKLGGILVEIANHKNGMLNLVIGIGINVSLSKQTEISQPYAEVCEIDPDVERQTLLPKLIQHLYTRLNIFEQNGIDEEFQQAWQSYNAFSNSEINVLTEQGVISGIEQGIDERGYLKVLCGNKIQMFNGGEVSLRKK.

The segment at residues 14–33 is a DNA-binding region (H-T-H motif); that stretch reads QPKVRSELEKFSKNLEEDIQ. Residues 62-236 enclose the BPL/LPL catalytic domain; the sequence is QISTALFPYS…HLYTRLNIFE (175 aa). Biotin-binding positions include 80–82, glutamine 103, 107–109, and lysine 167; these read STN and RGR.

It belongs to the biotin--protein ligase family.

It carries out the reaction biotin + L-lysyl-[protein] + ATP = N(6)-biotinyl-L-lysyl-[protein] + AMP + diphosphate + H(+). Functionally, acts both as a biotin--[acetyl-CoA-carboxylase] ligase and a biotin-operon repressor. In the presence of ATP, BirA activates biotin to form the BirA-biotinyl-5'-adenylate (BirA-bio-5'-AMP or holoBirA) complex. HoloBirA can either transfer the biotinyl moiety to the biotin carboxyl carrier protein (BCCP) subunit of acetyl-CoA carboxylase, or bind to the biotin operator site and inhibit transcription of the operon. This is Bifunctional ligase/repressor BirA from Haemophilus influenzae (strain ATCC 51907 / DSM 11121 / KW20 / Rd).